The following is a 731-amino-acid chain: Autophagy-related protein 20 (731 aa).

Positions 1-22 (MSSVLRNQDNPPTISEVSSTTK) are enriched in polar residues. The segment at 1 to 130 (MSSVLRNQDN…NNKSNNVSRV (130 aa)) is disordered. The segment covering 31–41 (KQEEKEKEKEI) has biased composition (basic and acidic residues). Polar residues predominate over residues 69 to 82 (SFMTANSFNEGPNT). Low complexity-rich tracts occupy residues 92 to 102 (NNNSSSNNNRG) and 113 to 128 (LLLY…NNVS). The region spanning 164–340 (IQITEAGNSN…KFLDPNANWG (177 aa)) is the PX domain. Positions 205, 207, and 231 each coordinate a 1,2-diacyl-sn-glycero-3-phospho-(1D-myo-inositol-3-phosphate). The tract at residues 253–277 (SVAGSNGNSGGSGGGGASGGAGSGS) is disordered. Gly residues predominate over residues 259–277 (GNSGGSGGGGASGGAGSGS). R306 is an a 1,2-diacyl-sn-glycero-3-phospho-(1D-myo-inositol-3-phosphate) binding site. A disordered region spans residues 586–626 (NSQVKPKNGKYNLEQQQSSTVSPAPPPGPPPSSSSSSSSSS). Residues 608–617 (PAPPPGPPPS) are compositionally biased toward pro residues.

This sequence belongs to the sorting nexin family.

The protein resides in the endosome membrane. The protein localises to the preautophagosomal structure membrane. Functionally, required for cytoplasm to vacuole transport (Cvt), pexophagy and mitophagy. Also involved in endoplasmic reticulum-specific autophagic process and is essential for the survival of cells subjected to severe ER stress. Functions in protein retrieval from the endocytic pathway. The sequence is that of Autophagy-related protein 20 (ATG20) from Candida albicans (strain SC5314 / ATCC MYA-2876) (Yeast).